A 146-amino-acid chain; its full sequence is Hut operon positive regulatory protein (146 aa).

This sequence belongs to the HutP family. In terms of assembly, homohexamer.

Functionally, antiterminator that binds to cis-acting regulatory sequences on the mRNA in the presence of histidine, thereby suppressing transcription termination and activating the hut operon for histidine utilization. This chain is Hut operon positive regulatory protein, found in Bacillus cereus (strain G9842).